The following is a 230-amino-acid chain: Nicotinamide riboside kinase 2 (230 aa).

Residue 9–17 (GMTNGGKTT) participates in ATP binding. Residues Thr-16 and Asp-35 each contribute to the Mg(2+) site. The active-site Proton acceptor is the Asp-35. Residues 35–38 (DDFF) and 54–55 (WD) each bind substrate. Arg-130 contacts ATP. Substrate contacts are provided by residues Arg-131 and 136–137 (YT). Residues 134–136 (RNY) and 174–176 (KSR) each bind ATP. The segment at 191 to 230 (LLNRSQESAPSPARPARTQGPGRGCGHRTARPAASQQDSM) is disordered.

This sequence belongs to the uridine kinase family. NRK subfamily. In terms of assembly, monomer. Interacts with ITGB1 alone or when associated with alpha-7, but not with alpha-5. Predominantly expressed in skeletal muscle and, at a much lower level, in the heart (at protein level). No expression in brain, kidney, liver, lung, pancreas nor placenta.

The catalysed reaction is beta-nicotinamide D-riboside + ATP = beta-nicotinamide D-ribonucleotide + ADP + H(+). It catalyses the reaction beta-D-ribosylnicotinate + ATP = nicotinate beta-D-ribonucleotide + ADP + H(+). Its pathway is cofactor biosynthesis; NAD(+) biosynthesis. Its function is as follows. Catalyzes the phosphorylation of nicotinamide riboside (NR) and nicotinic acid riboside (NaR) to form nicotinamide mononucleotide (NMN) and nicotinic acid mononucleotide (NaMN). Reduces laminin matrix deposition and cell adhesion to laminin, but not to fibronectin. Involved in the regulation of PXN at the protein level and of PXN tyrosine phosphorylation. May play a role in the regulation of terminal myogenesis. The sequence is that of Nicotinamide riboside kinase 2 (NMRK2) from Homo sapiens (Human).